Here is a 177-residue protein sequence, read N- to C-terminus: Protein PrsK (177 aa).

Positions 1–21 (MIKSTGALLLFAALSAGQAMA) are cleaved as a signal peptide.

Its subcellular location is the fimbrium. The chain is Protein PrsK (prsK) from Escherichia coli.